The primary structure comprises 382 residues: MKALHFGAGNIGRGFIGKLLADAGIQLTFADVNQVVLDALNARHSYQVHVVGETEQVDTVSGVNAVSSIGDDVVDLIAQVDLVTTAVGPVVLERIAPAIAKGLVKRKEQGNESPLNIIACENMVRGTTQLKGHVMNALPEDAKAWVEEHVGFVDSAVDRIVPPSASATNDPLEVTVETFSEWIVDKTQFKGALPNIPGMELTDNLMAFVERKLFTLNTGHAITAYLGKLAAHQTIRDAILDEKIRAVVKGAMEESGAVLIKRYGFDADKHAAYIQKILGRFENPYLKDDVERVGRQPLRKLSAGDRLIKPLLGTLEYGLPHKNLIEGIAAAMHFRSEDDPQAQELAALIADKGPQAALAQISGLDANSEVVSEAVTAYKAMQ.

3–14 (ALHFGAGNIGRG) is an NAD(+) binding site. Lysine 269 carries the post-translational modification N6-acetyllysine.

It belongs to the mannitol dehydrogenase family.

The catalysed reaction is D-mannitol 1-phosphate + NAD(+) = beta-D-fructose 6-phosphate + NADH + H(+). The polypeptide is Mannitol-1-phosphate 5-dehydrogenase (Escherichia coli O7:K1 (strain IAI39 / ExPEC)).